The chain runs to 511 residues: Bifunctional purine biosynthesis protein PurH (511 aa).

The region spanning 1 to 145 (MKKRALVSVS…KNHKFVSVIV (145 aa)) is the MGS-like domain.

This sequence belongs to the PurH family.

The enzyme catalyses (6R)-10-formyltetrahydrofolate + 5-amino-1-(5-phospho-beta-D-ribosyl)imidazole-4-carboxamide = 5-formamido-1-(5-phospho-D-ribosyl)imidazole-4-carboxamide + (6S)-5,6,7,8-tetrahydrofolate. It catalyses the reaction IMP + H2O = 5-formamido-1-(5-phospho-D-ribosyl)imidazole-4-carboxamide. It functions in the pathway purine metabolism; IMP biosynthesis via de novo pathway; 5-formamido-1-(5-phospho-D-ribosyl)imidazole-4-carboxamide from 5-amino-1-(5-phospho-D-ribosyl)imidazole-4-carboxamide (10-formyl THF route): step 1/1. The protein operates within purine metabolism; IMP biosynthesis via de novo pathway; IMP from 5-formamido-1-(5-phospho-D-ribosyl)imidazole-4-carboxamide: step 1/1. The polypeptide is Bifunctional purine biosynthesis protein PurH (Bacillus thuringiensis subsp. konkukian (strain 97-27)).